We begin with the raw amino-acid sequence, 543 residues long: Formate--tetrahydrofolate ligase (543 aa).

54 to 61 (TPAGEGKT) lines the ATP pocket.

The protein belongs to the formate--tetrahydrofolate ligase family.

The catalysed reaction is (6S)-5,6,7,8-tetrahydrofolate + formate + ATP = (6R)-10-formyltetrahydrofolate + ADP + phosphate. Its pathway is one-carbon metabolism; tetrahydrofolate interconversion. In Thermus thermophilus (strain ATCC BAA-163 / DSM 7039 / HB27), this protein is Formate--tetrahydrofolate ligase.